Reading from the N-terminus, the 507-residue chain is Decapping nuclease RAI1 (507 aa).

Residue Arg73 participates in substrate binding. Glu230 serves as a coordination point for a divalent metal cation. Positions 272 and 289 each coordinate substrate. Asp291, Glu306, and Leu307 together coordinate a divalent metal cation. Substrate contacts are provided by Lys308 and Gln340.

This sequence belongs to the DXO/Dom3Z family. Interacts with RAT1; the interaction is direct, stabilizes RAT1 protein structure and stimulates its exoribonuclease activity. The interaction also stimulates RAI1 pyrophosphohydrolase activity, probably by recruiting it to mRNA substrates. Requires a divalent metal cation as cofactor.

It is found in the nucleus. It catalyses the reaction a 5'-end NAD(+)-phospho-ribonucleoside in mRNA + H2O = a 5'-end phospho-ribonucleoside in mRNA + NAD(+) + H(+). It carries out the reaction a 5'-end (N(7)-methyl 5'-triphosphoguanosine)-ribonucleoside-ribonucleotide in mRNA + H2O = a (N(7)-methyl 5'-triphosphoguanosine)-nucleoside + a 5'-end phospho-ribonucleoside in mRNA + H(+). The catalysed reaction is a 5'-end triphospho-ribonucleoside in mRNA + H2O = a 5'-end phospho-ribonucleoside in mRNA + diphosphate + H(+). In terms of biological role, decapping enzyme for NAD-capped RNAs: specifically hydrolyzes the nicotinamide adenine dinucleotide (NAD) cap from a subset of RNAs by removing the entire NAD moiety from the 5'-end of an NAD-capped RNA. The NAD-cap is present at the 5'-end of some RNAs and snoRNAs. In contrast to the canonical 5'-end N7 methylguanosine (m7G) cap, the NAD cap promotes mRNA decay. Also acts as a non-canonical decapping enzyme that removes the entire cap structure of m7G capped or incompletely capped RNAs. Has decapping activity toward incomplete 5'-end m7G cap mRNAs such as unmethylated 5'-end-capped RNA (cap0), while it has no activity toward 2'-O-ribose methylated m7G cap (cap1). Also possesses RNA 5'-pyrophosphohydrolase activity by hydrolyzing the 5'-end triphosphate to release pyrophosphates. Stimulates exoribonuclease activity of Rat1, allowing it to degrade RNAs with stable secondary structure more effectively. The polypeptide is Decapping nuclease RAI1 (RAI1) (Mycosarcoma maydis (Corn smut fungus)).